Consider the following 350-residue polypeptide: Nicotinate-nucleotide--dimethylbenzimidazole phosphoribosyltransferase (350 aa).

Catalysis depends on Glu316, which acts as the Proton acceptor.

This sequence belongs to the CobT family.

It catalyses the reaction 5,6-dimethylbenzimidazole + nicotinate beta-D-ribonucleotide = alpha-ribazole 5'-phosphate + nicotinate + H(+). The protein operates within nucleoside biosynthesis; alpha-ribazole biosynthesis; alpha-ribazole from 5,6-dimethylbenzimidazole: step 1/2. In terms of biological role, catalyzes the synthesis of alpha-ribazole-5'-phosphate from nicotinate mononucleotide (NAMN) and 5,6-dimethylbenzimidazole (DMB). This is Nicotinate-nucleotide--dimethylbenzimidazole phosphoribosyltransferase from Bradyrhizobium diazoefficiens (strain JCM 10833 / BCRC 13528 / IAM 13628 / NBRC 14792 / USDA 110).